Consider the following 546-residue polypeptide: Chaperonin GroEL 5 (546 aa).

ATP-binding positions include 30-33, K51, 87-91, G415, and D495; these read TLGP and DGTTT.

Belongs to the chaperonin (HSP60) family. In terms of assembly, forms a cylinder of 14 subunits composed of two heptameric rings stacked back-to-back. Interacts with the co-chaperonin GroES.

Its subcellular location is the cytoplasm. It catalyses the reaction ATP + H2O + a folded polypeptide = ADP + phosphate + an unfolded polypeptide.. Functionally, together with its co-chaperonin GroES, plays an essential role in assisting protein folding. The GroEL-GroES system forms a nano-cage that allows encapsulation of the non-native substrate proteins and provides a physical environment optimized to promote and accelerate protein folding. The chain is Chaperonin GroEL 5 from Paraburkholderia xenovorans (strain LB400).